Here is a 695-residue protein sequence, read N- to C-terminus: Centrosomal protein of 89 kDa (695 aa).

3 disordered regions span residues 24 to 54 (LIPAATIAPRPAVPRTPPPRSPNPSPERPRS), 66 to 147 (TGRT…GDED), and 167 to 272 (AVPL…SEVL). Positions 34–49 (PAVPRTPPPRSPNPSP) are enriched in pro residues. Composition is skewed to acidic residues over residues 124–146 (DEDDDEDDEGNDIDELEGLEGDE) and 178–189 (DSDVDEETEDSA). A compositionally biased stretch (polar residues) spans 209–226 (GQTQPSSLPQPRSVSRRS). The span at 251–271 (TNKESPVRVNERDRSSEDSEV) shows a compositional bias: basic and acidic residues. Coiled-coil stretches lie at residues 276–368 (LEVQ…RYQA) and 406–632 (AYED…LEKE).

The protein localises to the cytoplasm. It localises to the cytosol. Its subcellular location is the cytoskeleton. The protein resides in the microtubule organizing center. It is found in the centrosome. The protein localises to the spindle pole. It localises to the centriole. Its subcellular location is the mitochondrion intermembrane space. Its function is as follows. Required for ciliogenesis. Also plays a role in mitochondrial metabolism where it may modulate complex IV activity. The chain is Centrosomal protein of 89 kDa (cep89) from Danio rerio (Zebrafish).